Here is a 126-residue protein sequence, read N- to C-terminus: Histone H2B type 1-K (126 aa).

The segment covering 1-12 (MPEPAKSAPAPK) has biased composition (low complexity). The disordered stretch occupies residues 1–36 (MPEPAKSAPAPKKGSKKAVTKAQKKDGKKRKRSRKE). The residue at position 2 (Pro2) is an N-acetylproline. Glu3 carries the ADP-ribosyl glutamic acid modification. Lys6 carries the N6-(2-hydroxyisobutyryl)lysine; alternate modification. Lys6 bears the N6-(beta-hydroxybutyryl)lysine; alternate mark. The residue at position 6 (Lys6) is an N6-acetyllysine; alternate. An N6-butyryllysine; alternate modification is found at Lys6. N6-crotonyllysine; alternate is present on Lys6. Lys6 is modified (N6-lactoyllysine; alternate). A Glycyl lysine isopeptide (Lys-Gly) (interchain with G-Cter in SUMO2); alternate cross-link involves residue Lys6. An ADP-ribosylserine modification is found at Ser7. Lys12 is subject to N6-(beta-hydroxybutyryl)lysine; alternate. An N6-acetyllysine; alternate mark is found at Lys12 and Lys13. N6-crotonyllysine; alternate occurs at positions 12 and 13. N6-lactoyllysine; alternate is present on Lys12. Residue Lys13 is modified to N6-(2-hydroxyisobutyryl)lysine; alternate. Ser15 bears the Phosphoserine; by STK4/MST1 mark. Lys16, Lys17, Lys21, and Lys24 each carry N6-acetyllysine; alternate. Residues Lys16, Lys17, Lys21, and Lys24 each carry the N6-crotonyllysine; alternate modification. An N6-lactoyllysine; alternate mark is found at Lys16, Lys17, Lys21, and Lys24. Lys17 is modified (N6-glutaryllysine; alternate). N6-(2-hydroxyisobutyryl)lysine; alternate occurs at positions 21 and 24. Lys21 is subject to N6-(beta-hydroxybutyryl)lysine; alternate. Lys21 bears the N6-butyryllysine; alternate mark. Residue Lys21 forms a Glycyl lysine isopeptide (Lys-Gly) (interchain with G-Cter in SUMO2); alternate linkage. The residue at position 25 (Lys25) is an N6-(2-hydroxyisobutyryl)lysine. An N6-(2-hydroxyisobutyryl)lysine; alternate modification is found at Lys35. Lys35 carries the post-translational modification N6-(beta-hydroxybutyryl)lysine; alternate. The residue at position 35 (Lys35) is an N6-crotonyllysine; alternate. Lys35 carries the N6-glutaryllysine; alternate modification. Lys35 is subject to N6-succinyllysine; alternate. Lys35 is covalently cross-linked (Glycyl lysine isopeptide (Lys-Gly) (interchain with G-Cter in ubiquitin); alternate). A PolyADP-ribosyl glutamic acid modification is found at Glu36. Ser37 bears the Phosphoserine; by AMPK mark. Lys44, Lys47, and Lys58 each carry N6-(2-hydroxyisobutyryl)lysine; alternate. At Lys44 the chain carries N6-lactoyllysine; alternate. 2 positions are modified to N6-glutaryllysine; alternate: Lys44 and Lys47. The residue at position 47 (Lys47) is an N6-methyllysine; alternate. Lys58 bears the N6,N6-dimethyllysine; alternate mark. Arg80 carries the post-translational modification Dimethylated arginine. The residue at position 86 (Lys86) is an N6-(2-hydroxyisobutyryl)lysine; alternate. Lys86 bears the N6-acetyllysine; alternate mark. At Lys86 the chain carries N6-lactoyllysine; alternate. Lys86 is subject to N6,N6,N6-trimethyllysine; alternate. An omega-N-methylarginine mark is found at Arg87 and Arg93. Lys109 is subject to N6-(2-hydroxyisobutyryl)lysine; alternate. Lys109 carries the N6-lactoyllysine; alternate modification. At Lys109 the chain carries N6-glutaryllysine; alternate. An N6-methyllysine; alternate modification is found at Lys109. An O-linked (GlcNAc) serine glycan is attached at Ser113. Residue Thr116 is modified to Phosphothreonine. N6-(2-hydroxyisobutyryl)lysine; alternate is present on residues Lys117 and Lys121. The residue at position 117 (Lys117) is an N6-(beta-hydroxybutyryl)lysine; alternate. 2 positions are modified to N6-lactoyllysine; alternate: Lys117 and Lys121. 2 positions are modified to N6-glutaryllysine; alternate: Lys117 and Lys121. An N6-succinyllysine; alternate mark is found at Lys117 and Lys121. Residue Lys117 is modified to N6-methylated lysine; alternate. Lys121 is covalently cross-linked (Glycyl lysine isopeptide (Lys-Gly) (interchain with G-Cter in ubiquitin); alternate).

This sequence belongs to the histone H2B family. As to quaternary structure, the nucleosome is a histone octamer containing two molecules each of H2A, H2B, H3 and H4 assembled in one H3-H4 heterotetramer and two H2A-H2B heterodimers. The octamer wraps approximately 147 bp of DNA. Post-translationally, monoubiquitination at Lys-35 (H2BK34Ub) by the MSL1/MSL2 dimer is required for histone H3 'Lys-4' (H3K4me) and 'Lys-79' (H3K79me) methylation and transcription activation at specific gene loci, such as HOXA9 and MEIS1 loci. Similarly, monoubiquitination at Lys-121 (H2BK120Ub) by the RNF20/40 complex gives a specific tag for epigenetic transcriptional activation and is also prerequisite for histone H3 'Lys-4' and 'Lys-79' methylation. It also functions cooperatively with the FACT dimer to stimulate elongation by RNA polymerase II. H2BK120Ub also acts as a regulator of mRNA splicing: deubiquitination by USP49 is required for efficient cotranscriptional splicing of a large set of exons. In terms of processing, phosphorylated on Ser-15 (H2BS14ph) by STK4/MST1 during apoptosis; which facilitates apoptotic chromatin condensation. Also phosphorylated on Ser-15 in response to DNA double strand breaks (DSBs), and in correlation with somatic hypermutation and immunoglobulin class-switch recombination. Phosphorylation at Ser-37 (H2BS36ph) by AMPK in response to stress promotes transcription. GlcNAcylation at Ser-113 promotes monoubiquitination of Lys-121. It fluctuates in response to extracellular glucose, and associates with transcribed genes. Post-translationally, ADP-ribosylated by PARP1 or PARP2 on Ser-7 (H2BS6ADPr) in response to DNA damage. H2BS6ADPr promotes recruitment of CHD1L. Mono-ADP-ribosylated on Glu-3 (H2BE2ADPr) by PARP3 in response to single-strand breaks. Poly ADP-ribosylation on Glu-36 (H2BE35ADPr) by PARP1 regulates adipogenesis: it inhibits phosphorylation at Ser-37 (H2BS36ph), thereby blocking expression of pro-adipogenetic genes. In terms of processing, crotonylation (Kcr) is specifically present in male germ cells and marks testis-specific genes in post-meiotic cells, including X-linked genes that escape sex chromosome inactivation in haploid cells. Crotonylation marks active promoters and enhancers and confers resistance to transcriptional repressors. It is also associated with post-meiotically activated genes on autosomes. Lactylated in macrophages by EP300/P300 by using lactoyl-CoA directly derived from endogenous or exogenous lactate, leading to stimulates gene transcription.

The protein resides in the nucleus. Its subcellular location is the chromosome. Functionally, core component of nucleosome. Nucleosomes wrap and compact DNA into chromatin, limiting DNA accessibility to the cellular machineries which require DNA as a template. Histones thereby play a central role in transcription regulation, DNA repair, DNA replication and chromosomal stability. DNA accessibility is regulated via a complex set of post-translational modifications of histones, also called histone code, and nucleosome remodeling. The polypeptide is Histone H2B type 1-K (Macaca fascicularis (Crab-eating macaque)).